Consider the following 89-residue polypeptide: Small ribosomal subunit protein uS15 (89 aa).

Residues 1–10 show a composition bias toward polar residues; sequence MAVTTDQKSQ. The tract at residues 1–22 is disordered; it reads MAVTTDQKSQVMRDYQRAAGDT.

It belongs to the universal ribosomal protein uS15 family. Part of the 30S ribosomal subunit. Forms a bridge to the 50S subunit in the 70S ribosome, contacting the 23S rRNA.

Its function is as follows. One of the primary rRNA binding proteins, it binds directly to 16S rRNA where it helps nucleate assembly of the platform of the 30S subunit by binding and bridging several RNA helices of the 16S rRNA. Functionally, forms an intersubunit bridge (bridge B4) with the 23S rRNA of the 50S subunit in the ribosome. This chain is Small ribosomal subunit protein uS15, found in Nitrosomonas europaea (strain ATCC 19718 / CIP 103999 / KCTC 2705 / NBRC 14298).